The following is a 525-amino-acid chain: Bifunctional enzyme NanE/NanK (525 aa).

The segment at 1 to 241 (MRGSPRNLCR…DAVESAAKPS (241 aa)) is manNAc-6-P epimerase. Residues 242-525 (SPVLAFDIGG…VADLAATYFS (284 aa)) form a manNAc kinase region. ATP contacts are provided by residues 246–253 (AFDIGGTK) and 372–379 (GIGGGIVL).

It in the N-terminal section; belongs to the NanE family. This sequence in the C-terminal section; belongs to the ROK (NagC/XylR) family. NanK subfamily.

It catalyses the reaction an N-acyl-D-glucosamine 6-phosphate = an N-acyl-D-mannosamine 6-phosphate. It carries out the reaction an N-acyl-D-mannosamine + ATP = an N-acyl-D-mannosamine 6-phosphate + ADP + H(+). The protein operates within amino-sugar metabolism; N-acetylneuraminate degradation; D-fructose 6-phosphate from N-acetylneuraminate: step 2/5. It participates in amino-sugar metabolism; N-acetylneuraminate degradation; D-fructose 6-phosphate from N-acetylneuraminate: step 3/5. Its function is as follows. Converts N-acetylmannosamine-6-phosphate (ManNAc-6-P) to N-acetylglucosamine-6-phosphate (GlcNAc-6-P). Functionally, catalyzes the phosphorylation of N-acetylmannosamine (ManNAc) to ManNAc-6-P. This Brucella suis biovar 1 (strain 1330) protein is Bifunctional enzyme NanE/NanK (nanEK).